The following is a 712-amino-acid chain: WD repeat-containing protein 91 (712 aa).

Residues 148-180 adopt a coiled-coil conformation; sequence RRTNQVQEENEVLRQKLFALQAEIHRLKKEEQQ. Ser221 carries the phosphoserine modification. Low complexity predominate over residues 230–243; the sequence is LLPQSKKSPSRLSP. Residues 230-336 form a disordered region; it reads LLPQSKKSPS…EAEPCPELHT (107 aa). Ser253 and Ser258 each carry phosphoserine. Residues 297–308 are compositionally biased toward basic and acidic residues; it reads RLQDHGKERKEL. WD repeat units follow at residues 371 to 410, 413 to 453, 480 to 520, 525 to 564, 567 to 606, 629 to 667, and 674 to 712; these read EHHSSIMHCRVDCSGRRVASLDVDGVIKVWSFNPIMQTKA, ISKS…NLCE, AAPS…QQLQ, PEPIAINCTAFNHNGNLLVTGAADGVIRLFDMQQHECAMS, AHYGEVYSVEFSYDENTVYSIGEDGKFIQWNIHKSGLKVS, VQVPRGRLFAFDSEGNYMLTCSATGGVIYKLGGDEKVLE, and GHRAPVVTVDWSTAMDCGTCLTASMDGKIKLTTLLAHKA.

The protein belongs to the WD repeat WDR91 family. Interacts with WDR81; involved in early to late endosome cargo transport. Interacts with BECN1; negatively regulates the PI3 kinase/PI3K activity associated with endosomal membranes.

It is found in the early endosome membrane. The protein localises to the late endosome membrane. Functionally, functions as a negative regulator of the PI3 kinase/PI3K activity associated with endosomal membranes via BECN1, a core subunit of the PI3K complex. By modifying the phosphatidylinositol 3-phosphate/PtdInsP3 content of endosomal membranes may regulate endosome fusion, recycling, sorting and early to late endosome transport. It is for instance, required for the delivery of cargos like BST2/tetherin from early to late endosome and thereby participates indirectly to their degradation by the lysosome. May play a role in meiosis. The sequence is that of WD repeat-containing protein 91 from Pongo abelii (Sumatran orangutan).